We begin with the raw amino-acid sequence, 567 residues long: Oxygen-dependent choline dehydrogenase (567 aa).

4–33 is a binding site for FAD; it reads DYIIIGAGSAGNVLAARLTEDADVTVLLLE. Histidine 473 functions as the Proton acceptor in the catalytic mechanism.

This sequence belongs to the GMC oxidoreductase family. The cofactor is FAD.

The catalysed reaction is choline + A = betaine aldehyde + AH2. The enzyme catalyses betaine aldehyde + NAD(+) + H2O = glycine betaine + NADH + 2 H(+). The protein operates within amine and polyamine biosynthesis; betaine biosynthesis via choline pathway; betaine aldehyde from choline (cytochrome c reductase route): step 1/1. Functionally, involved in the biosynthesis of the osmoprotectant glycine betaine. Catalyzes the oxidation of choline to betaine aldehyde and betaine aldehyde to glycine betaine at the same rate. The polypeptide is Oxygen-dependent choline dehydrogenase (Yersinia pseudotuberculosis serotype IB (strain PB1/+)).